A 241-amino-acid polypeptide reads, in one-letter code: Uracil-DNA glycosylase (241 aa).

D71 (proton acceptor) is an active-site residue.

The protein belongs to the uracil-DNA glycosylase (UDG) superfamily. UNG family.

It localises to the cytoplasm. The enzyme catalyses Hydrolyzes single-stranded DNA or mismatched double-stranded DNA and polynucleotides, releasing free uracil.. Excises uracil residues from the DNA which can arise as a result of misincorporation of dUMP residues by DNA polymerase or due to deamination of cytosine. This is Uracil-DNA glycosylase from Xanthomonas euvesicatoria pv. vesicatoria (strain 85-10) (Xanthomonas campestris pv. vesicatoria).